A 906-amino-acid chain; its full sequence is Protein translocase subunit SecA (906 aa).

ATP-binding positions include Q86, 104–108 (GEGKT), and D511. 2 stretches are compositionally biased toward basic and acidic residues: residues 853-865 (HESV…RHDE) and 877-888 (VRREGPKVKRND). Residues 853-906 (HESVIDNNQRHDEDEQEEAPKVQQVRREGPKVKRNDPCPCGSGKKYKQCHSKVE) form a disordered region. 4 residues coordinate Zn(2+): C890, C892, C901, and H902. Over residues 896 to 906 (KKYKQCHSKVE) the composition is skewed to basic residues.

It belongs to the SecA family. In terms of assembly, monomer and homodimer. Part of the essential Sec protein translocation apparatus which comprises SecA, SecYEG and auxiliary proteins SecDF-YajC and YidC. It depends on Zn(2+) as a cofactor.

The protein localises to the cell inner membrane. It is found in the cytoplasm. It catalyses the reaction ATP + H2O + cellular proteinSide 1 = ADP + phosphate + cellular proteinSide 2.. Functionally, part of the Sec protein translocase complex. Interacts with the SecYEG preprotein conducting channel. Has a central role in coupling the hydrolysis of ATP to the transfer of proteins into and across the cell membrane, serving both as a receptor for the preprotein-SecB complex and as an ATP-driven molecular motor driving the stepwise translocation of polypeptide chains across the membrane. In Francisella tularensis subsp. tularensis (strain WY96-3418), this protein is Protein translocase subunit SecA.